The following is a 548-amino-acid chain: Polynucleotide 5'-hydroxyl-kinase nol-9 (548 aa).

Position 186 to 193 (186 to 193 (GHKGAGKS)) interacts with ATP.

Belongs to the Clp1 family. NOL9/GRC3 subfamily.

It localises to the nucleus. Its subcellular location is the nucleolus. Its function is as follows. Polynucleotide 5'-kinase involved in rRNA processing. In Caenorhabditis briggsae, this protein is Polynucleotide 5'-hydroxyl-kinase nol-9 (nol-9).